The following is a 188-amino-acid chain: Ribosome-recycling factor (188 aa).

This sequence belongs to the RRF family.

It is found in the cytoplasm. Functionally, responsible for the release of ribosomes from messenger RNA at the termination of protein biosynthesis. May increase the efficiency of translation by recycling ribosomes from one round of translation to another. This chain is Ribosome-recycling factor, found in Lawsonia intracellularis (strain PHE/MN1-00).